The following is a 298-amino-acid chain: Estradiol 17-beta-dehydrogenase 11 (298 aa).

The N-terminal stretch at 1 to 21 (MKYLLDLILLLPLLIVFSIES) is a signal peptide. 40–64 (LITGAGHGIGRLTAYEFAKLNTKLV) contacts NADP(+). Ser172 is a substrate binding site. The active-site Proton acceptor is Tyr185.

It belongs to the short-chain dehydrogenases/reductases (SDR) family. 17-beta-HSD 3 subfamily. As to expression, expressed in the liver (at protein level). Also expressed in the intestine and, at much lower levels, in the kidney.

Its subcellular location is the endoplasmic reticulum. It localises to the lipid droplet. It catalyses the reaction 17beta-estradiol + NAD(+) = estrone + NADH + H(+). It carries out the reaction 17beta-estradiol + NADP(+) = estrone + NADPH + H(+). In terms of biological role, can convert androstan-3-alpha,17-beta-diol (3-alpha-diol) to androsterone in vitro, suggesting that it may participate in androgen metabolism during steroidogenesis. May act by metabolizing compounds that stimulate steroid synthesis and/or by generating metabolites that inhibit it. Has no activity toward DHEA (dehydroepiandrosterone), or A-dione (4-androste-3,17-dione), and only a slight activity toward testosterone to A-dione. This chain is Estradiol 17-beta-dehydrogenase 11 (Hsd17b11), found in Mus musculus (Mouse).